Here is a 1622-residue protein sequence, read N- to C-terminus: ABC transporter C family member 1 (1622 aa).

Helical transmembrane passes span 37–57 (FVLG…LWLI), 73–93 (FSYF…FRLV), 110–130 (EAFM…MTVV), 145–165 (FAVI…LSVK), 174–194 (YLYI…FVYF), 336–356 (AWIG…GVLC), 440–460 (VASI…TVII), 527–547 (FILN…FSLL), and 557–577 (FTSL…PNII). The region spanning 302 to 582 (FWWGGFWKIG…LPNIITQMVN (281 aa)) is the ABC transmembrane type-1 1 domain. The 225-residue stretch at 614 to 838 (ISIRNGYFSW…GPLFQRLMEN (225 aa)) folds into the ABC transporter 1 domain. Position 649 to 656 (649 to 656 (GSTGEGKT)) interacts with ATP. The tract at residues 852–876 (AEVDQTSVKPVENGNANNLQKDGIE) is disordered. Residues 855–871 (DQTSVKPVENGNANNLQ) show a composition bias toward polar residues. Transmembrane regions (helical) follow at residues 909–929 (ALGG…TQVF), 951–971 (PLFY…VTLI), 1027–1049 (AVFV…LIGI), 1053–1072 (LSLW…YLYY), 1138–1158 (LGIR…SLAV), and 1172–1192 (STMG…TAVL). Residues 916-1200 (VMMLVICYVL…VLRLASLAEN (285 aa)) enclose the ABC transmembrane type-1 2 domain. The interval 1231–1246 (WPSSGSIKFEDVVLRY) is interaction with calmodulin and FKP42/TWD1. The ABC transporter 2 domain occupies 1237 to 1471 (IKFEDVVLRY…GESSFSKMVQ (235 aa)). 1271–1278 (GRTGAGKS) is an ATP binding site.

It belongs to the ABC transporter superfamily. ABCC family. Conjugate transporter (TC 3.A.1.208) subfamily. As to quaternary structure, interacts with calmodulin (CaM), PAS1 and FKBP42/TWD1. As to expression, ubiquitous, with higher levels in leaves and stems and lower levels in roots. Localized in the root apex, root hair tips and root epidermis.

The protein localises to the vacuole membrane. The enzyme catalyses ATP + H2O + xenobioticSide 1 = ADP + phosphate + xenobioticSide 2.. In terms of biological role, pump for glutathione S-conjugates. Mediates the transport of S-(2,4-dinitrophenyl)-glutathione (DNP-GS), GSSG, cyanidin 3-glucoside-GS (C3G-GS) and metolachlor-GS (MOC-GS). This is ABC transporter C family member 1 (ABCC1) from Arabidopsis thaliana (Mouse-ear cress).